The primary structure comprises 800 residues: MRNVKGGVWKNTEDEILKVAIMKYGLNQWARISSLLTRKSPAQCKARWHEWLDPSIKKTEWSKEEEEKLLHLAKIFPSQWKTIAPLVGRTASQCLERYNRLLDEVQRQQDNENGGGSGGGGTTTTTTTTTGENDPRRLRMGDIDPTPETKPAKPDPIDMDEDEKETLSEAKARLSNTQGKKEKRKFREKQLEEARRLAFLQKKRELKAAGINYNPKKKGKEKSWDISKEIPFYLKPKAGFYDVPDEELRDEPNKDASFIGKRVDQIENPNYLQRQEKLNKLEDIKKSKKEIFNLPQLISETSKSNDVEHSIKRTKLQLPEPQLTDDDIQEISDYEKLNGSGSGGGSGGVGVGEFPLPAPRTASISSTAANNNTNNIRTPMKQDTIMSEAQNLLALSNAQTPLKGGAGPNVSQTPLPKSVNNSTPFRTPNPLANQTPTQHNKKQSLNDSNEFAIEDKFKRQQGKNQLLSNLKNLPSPTIEYKLELPSELPTIEDDTTLELDNSEIHIREQQQLKHKEQFKLRNRSTVLKRNLPRSRNLFPINKNNNNNNNNNINQDELRILKEINRIISHDNKTFPNDSITPSSTFDDDDDDDNHHHHHDDIDNNSINDNDEKYENYDYFTNTELEFADKLIRDEIEQIKQELKQPLPSSNEILEEIDQIRSQFIYLPKENQFIEKSNANQTQLIENLQFEYDKTLNKIKNSSMKSVNLEKKLNIYNGGYQNRSNTIIKNIDDMFDQLEQSEIEYQCFVALKNNESIQMEKRLKSIENQVYDQCEIESRLQQKYAQLLNEKNLLKKKLSIF.

2 HTH myb-type domains span residues 1–56 and 57–106; these read MRNV…DPSI and KKTE…DEVQ. 2 consecutive DNA-binding regions (H-T-H motif) follow at residues 29–52 and 80–102; these read WARI…HEWL and WKTI…NRLL. 4 disordered regions span residues 109–186, 334–378, 399–445, and 571–610; these read QDNE…KRKF, YEKL…NIRT, QTPL…KQSL, and NKTF…NDND. The segment covering 113 to 122 has biased composition (gly residues); it reads NGGGSGGGGT. The segment covering 133–142 has biased composition (basic and acidic residues); it reads NDPRRLRMGD. Gly residues predominate over residues 340–351; it reads SGSGGGSGGVGV. The segment covering 361 to 376 has biased composition (low complexity); it reads TASISSTAANNNTNNI. 2 stretches are compositionally biased toward polar residues: residues 409–445 and 573–584; these read NVSQ…KQSL and TFPNDSITPSST. Basic and acidic residues predominate over residues 592–601; it reads DNHHHHHDDI. Coiled coils occupy residues 621–700 and 748–800; these read NTEL…KIKN and VALK…LSIF.

This sequence belongs to the CEF1 family. As to quaternary structure, component of the precatalytic, catalytic and postcatalytic spliceosome complexes.

Its subcellular location is the nucleus. The protein resides in the cytoplasm. In terms of biological role, DNA-binding protein involved in cell cycle control. May act as a transcription activator. Plays a role in pre-mRNA splicing as core component of precatalytic, catalytic and postcatalytic spliceosomal complexes. May also play a role in the response to DNA damage (DDR). The polypeptide is Cell division cycle 5-like protein (cdc5l) (Dictyostelium discoideum (Social amoeba)).